The following is a 74-amino-acid chain: RNA-binding protein Hfq (74 aa).

The region spanning 9–69 (DQFLNQLRKE…ISTFMPQKNV (61 aa)) is the Sm domain.

It belongs to the Hfq family. In terms of assembly, homohexamer.

Functionally, RNA chaperone that binds small regulatory RNA (sRNAs) and mRNAs to facilitate mRNA translational regulation in response to envelope stress, environmental stress and changes in metabolite concentrations. Also binds with high specificity to tRNAs. The polypeptide is RNA-binding protein Hfq (Bacillus cytotoxicus (strain DSM 22905 / CIP 110041 / 391-98 / NVH 391-98)).